The chain runs to 269 residues: Lck-interacting transmembrane adapter 1 (269 aa).

Residues 1 to 7 are Extracellular-facing; sequence MRPPVPS. Residues 8–28 traverse the membrane as a helical; Signal-anchor for type III membrane protein segment; sequence APLALWVLGCFSLLLWLWALC. 2 S-palmitoyl cysteine lipidation sites follow: Cys-28 and Cys-31. At 29 to 269 the chain is on the cytoplasmic side; the sequence is TACHRKRAQR…VYESIKEMGL (241 aa). A disordered region spans residues 102–133; sequence STRSQVPNSAFPPRQLPRAPPAAPATAPSTSS. Positions 115 to 124 are enriched in pro residues; the sequence is RQLPRAPPAA. Phosphotyrosine occurs at positions 137, 175, and 207. Residues 137–140 form an interaction with GRB2 region; it reads YSNV. Interaction with CSK regions lie at residues 175–178 and 207–210; these read YACI and YSRV. Phosphotyrosine; by LYN or LCK occurs at positions 242 and 261. Residues 242–245 form an interaction with LCK and PIK3R1 region; that stretch reads YEAI. The tract at residues 261 to 264 is interaction with LCK, PLCG2 and PIK3R1; the sequence is YESI. A Phosphoserine modification is found at Ser-263.

In terms of assembly, when phosphorylated in response to TCR stimulation and/or CD4 costimulation, interacts with LCK, CSK, FYN, PTPN11/SHP2, GRB2, PIK3R1 and GRAP2. When phosphorylated in response to BCR activation, interacts with LYN, PIK3R1, PLCG2 and GRB2. Post-translationally, palmitoylation of Cys-28 and Cys-31 is required for raft targeting. In terms of processing, phosphorylated on tyrosines upon TCR activation and/or CD4 coreceptor stimulation, or upon BCR stimulation; which leads to the recruitment of SH2-containing proteins. As to expression, expressed in spleen and lung. Present in primary B-cells and peripheral T-cells (at protein level).

It localises to the cell membrane. Involved in BCR (B-cell antigen receptor)-mediated signaling in B-cells and TCR (T-cell antigen receptor)-mediated T-cell signaling in T-cells. In absence of TCR signaling, may be involved in CD4-mediated inhibition of T-cell activation. Couples activation of these receptors and their associated kinases with distal intracellular events such as calcium mobilization or MAPK activation through the recruitment of PLCG2, GRB2, GRAP2, and other signaling molecules. This chain is Lck-interacting transmembrane adapter 1 (Lime1), found in Mus musculus (Mouse).